Reading from the N-terminus, the 403-residue chain is tRNA(Met) cytidine acetate ligase (403 aa).

ATP-binding positions include 7 to 20, G102, N168, and R193; that span reads IVEY…HLYH.

This sequence belongs to the TmcAL family.

Its subcellular location is the cytoplasm. The enzyme catalyses cytidine(34) in elongator tRNA(Met) + acetate + ATP = N(4)-acetylcytidine(34) in elongator tRNA(Met) + AMP + diphosphate. In terms of biological role, catalyzes the formation of N(4)-acetylcytidine (ac(4)C) at the wobble position of elongator tRNA(Met), using acetate and ATP as substrates. First activates an acetate ion to form acetyladenylate (Ac-AMP) and then transfers the acetyl group to tRNA to form ac(4)C34. The polypeptide is tRNA(Met) cytidine acetate ligase (Clostridium tetani (strain Massachusetts / E88)).